We begin with the raw amino-acid sequence, 177 residues long: Small ribosomal subunit protein bS21m (177 aa).

A mitochondrion-targeting transit peptide spans 1–17 (MLKSTLRLSRISLRRGF).

This sequence belongs to the bacterial ribosomal protein bS21 family. Component of the mitochondrial small ribosomal subunit (mt-SSU). Mature yeast 74S mitochondrial ribosomes consist of a small (37S) and a large (54S) subunit. The 37S small subunit contains a 15S ribosomal RNA (15S mt-rRNA) and 34 different proteins. The 54S large subunit contains a 21S rRNA (21S mt-rRNA) and 46 different proteins.

It is found in the mitochondrion. In terms of biological role, component of the mitochondrial ribosome (mitoribosome), a dedicated translation machinery responsible for the synthesis of mitochondrial genome-encoded proteins, including at least some of the essential transmembrane subunits of the mitochondrial respiratory chain. The mitoribosomes are attached to the mitochondrial inner membrane and translation products are cotranslationally integrated into the membrane. This is Small ribosomal subunit protein bS21m (MRP21) from Saccharomyces cerevisiae (strain ATCC 204508 / S288c) (Baker's yeast).